We begin with the raw amino-acid sequence, 507 residues long: Wax ester synthase/diacylglycerol acyltransferase 5 (507 aa).

Topologically, residues 1–211 (MEIKIRRRRG…LKTSSRCYSR (211 aa)) are cytoplasmic. The active-site Proton acceptor is the His161. A helical membrane pass occupies residues 212–232 (FFWLVMVLWSAALLVLNTVCD). At 233–507 (ALEFIATALF…VVVQERTSTQ (275 aa)) the chain is on the lumenal side. 2 N-linked (GlcNAc...) asparagine glycosylation sites follow: Asn314 and Asn421.

The protein in the N-terminal section; belongs to the long-chain O-acyltransferase family. Mostly expressed in flowers and siliques.

Its subcellular location is the cell membrane. It localises to the endoplasmic reticulum membrane. The catalysed reaction is a long chain fatty alcohol + a fatty acyl-CoA = a wax ester + CoA. It catalyses the reaction an acyl-CoA + a 1,2-diacyl-sn-glycerol = a triacyl-sn-glycerol + CoA. It functions in the pathway glycerolipid metabolism; triacylglycerol biosynthesis. Its pathway is lipid metabolism. Functionally, bifunctional wax ester synthase/diacylglycerol acyltransferase. Involved in cuticular wax biosynthesis. The polypeptide is Wax ester synthase/diacylglycerol acyltransferase 5 (Arabidopsis thaliana (Mouse-ear cress)).